The chain runs to 968 residues: Alanine--tRNA ligase, cytoplasmic (968 aa).

Met-1 carries the N-acetylmethionine modification. Residues Arg-77, His-95, Trp-176, and 214–216 (IWN) contribute to the ATP site. Residues Asn-216 and Asp-239 each coordinate L-alanine. Gly-243 contributes to the ATP binding site. Phosphoserine is present on residues Ser-399 and Ser-555. Zn(2+) contacts are provided by His-605, His-609, Cys-723, and His-727. The short motif at 750-763 (RRIVAVTGAEAQKA) is the Nuclear localization signal element. At Lys-876 the chain carries N6-acetyllysine. Position 943 is an N6,N6,N6-trimethyllysine; alternate (Lys-943). An N6,N6-dimethyllysine; alternate modification is found at Lys-943. Position 943 is an N6-methyllysine; alternate (Lys-943).

It belongs to the class-II aminoacyl-tRNA synthetase family. As to quaternary structure, monomer. Interacts with ANKRD16; the interaction is direct. The cofactor is Zn(2+). Post-translationally, ISGylated. In terms of processing, methylation at 'Lys-943' by METTL21C.

The protein resides in the cytoplasm. It is found in the nucleus. It catalyses the reaction tRNA(Ala) + L-alanine + ATP = L-alanyl-tRNA(Ala) + AMP + diphosphate. It carries out the reaction (S)-lactate + ATP + H(+) = (S)-lactoyl-AMP + diphosphate. The enzyme catalyses (S)-lactoyl-AMP + L-lysyl-[protein] = N(6)-[(S)-lactoyl]-L-lysyl-[protein] + AMP + 2 H(+). With respect to regulation, the protein lactyltransferase activity is inhibited by beta-alanine. Functionally, catalyzes the attachment of alanine to tRNA(Ala) in a two-step reaction: alanine is first activated by ATP to form Ala-AMP and then transferred to the acceptor end of tRNA(Ala). Also edits incorrectly charged tRNA(Ala) via its editing domain. In presence of high levels of lactate, also acts as a protein lactyltransferase that mediates lactylation of lysine residues in target proteins, such as TEAD1, TP53/p53 and YAP1. Protein lactylation takes place in a two-step reaction: lactate is first activated by ATP to form lactate-AMP and then transferred to lysine residues of target proteins. Acts as an inhibitor of TP53/p53 activity by catalyzing lactylation of TP53/p53. Acts as a positive regulator of the Hippo pathway by mediating lactylation of TEAD1 and YAP1. This Mus musculus (Mouse) protein is Alanine--tRNA ligase, cytoplasmic.